Here is a 432-residue protein sequence, read N- to C-terminus: MTDIIDDLQWRGLIAQTTDLDDLRKALADGPVTLYCGFDPTAGSLHVGHLTQALTLARFQRAGHRPIALVGGATGMIGDPKPNAERTLNSPETIRQWVGNLKRQLSSFLEFTPEGAEPKPTDALLLDNAEWLGKLTAIGLLRDIGKHFSINQMLARETVKTRLEGAGMSYTEFSYVLLQSYDYVELYRRHGCTLQIGGSDQWGNITAGLDLIRRMEGNEPHGPAHALTTTLLTKADGTKFGKTESGAVWLDPELTSPYAFYQFWFNSDDRDIPRYLRIFSFRSREEIEELEQKTIERPAERAAQRALAEELTTLVHGEQECRNVIEASKALFGHGTLADLNPDTLGAALKEVPHVELSGTVRELPPLVDLFASTGLVPSKSAARRTIQEGGAYLNNAKVTDIEARVSEADLLHGRYLVLRRGKRNVGGVILR.

Y35 contacts L-tyrosine. The 'HIGH' region motif lies at 40–49 (PTAGSLHVGH). The L-tyrosine site is built by Y175 and Q179. The 'KMSKS' region signature appears at 239–243 (KFGKT). Residue K242 participates in ATP binding. An S4 RNA-binding domain is found at 365–422 (PPLVDLFASTGLVPSKSAARRTIQEGGAYLNNAKVTDIEARVSEADLLHGRYLVLRRG).

This sequence belongs to the class-I aminoacyl-tRNA synthetase family. TyrS type 1 subfamily. In terms of assembly, homodimer.

The protein resides in the cytoplasm. The catalysed reaction is tRNA(Tyr) + L-tyrosine + ATP = L-tyrosyl-tRNA(Tyr) + AMP + diphosphate + H(+). Functionally, catalyzes the attachment of tyrosine to tRNA(Tyr) in a two-step reaction: tyrosine is first activated by ATP to form Tyr-AMP and then transferred to the acceptor end of tRNA(Tyr). The protein is Tyrosine--tRNA ligase of Thermobifida fusca (strain YX).